The sequence spans 239 residues: Cyclo(L-leucyl-L-phenylalanyl) synthase (239 aa).

S37 functions as the Nucleophile in the catalytic mechanism. Residues N40, Y178–E182, and Y202 contribute to the substrate site.

The protein belongs to the CDPS family. In terms of assembly, monomer.

It carries out the reaction L-phenylalanyl-tRNA(Phe) + L-leucyl-tRNA(Leu) = cyclo(L-phenylalanyl-L-leucyl) + tRNA(Phe) + tRNA(Leu) + H(+). In terms of biological role, involved in the biosynthesis of albonoursin (cyclo[(alpha,beta-dehydro-Phe)-(alpha,beta-dehydro-Leu)]), an antibacterial peptide. It uses activated amino acids in the form of aminoacyl-tRNAs (aa-tRNAs) as substrates to catalyze the ATP-independent formation of cyclodipeptides which are intermediates in diketopiperazine (DKP) biosynthetic pathways. Catalyzes the formation of cyclo(L-Phe-L-Leu) (cFL) as major products from L-L-phenylalanyl-tRNA(Phe) and L-leucyl-tRNA(Leu). AlbC can also incorporate various nonpolar residues, such as L-phenylalanine, L-leucine, L-tyrosine and L-methionine, and to a much lesser extent L-alanine and L-valine, into cyclodipeptides. Indeed, ten possible cyclodipeptides composed of L-phenylalanine, L-leucine, L-tyrosine and L-methionine are all synthesized to detectable amounts by AlbC. In Streptomyces noursei (Streptomyces albulus), this protein is Cyclo(L-leucyl-L-phenylalanyl) synthase (albC).